The following is a 620-amino-acid chain: Probable potassium transport system protein Kup (620 aa).

12 consecutive transmembrane segments (helical) span residues 7-27 (LALAALGVVFGDIGTSPLYAI), 44-64 (VFGVLSLLVWSLLLIVSLKYL), 98-118 (FFLIAIGLFGAALLYGDGMIT), 135-155 (PAFHDLIIPATVTVLVILFLF), 166-186 (LFGPVILLWFVVLGVLGLVEI), 201-221 (GIMFLLNNQLHGFMVLGAVFL), 245-265 (WAFLVLPALLLNYFGQGALLL), 278-298 (LVPSWGLIPMVILSTSATIIA), 335-355 (IYVPAANWSLMVATISLVIGF), 361-381 (LAAAYGVAVTATMLISTILFY), 394-414 (VLNVMIVVFLLVDLAFFGASA), and 417-437 (LFHGAWFPLVIAAVMFTVMMT).

It belongs to the HAK/KUP transporter (TC 2.A.72) family.

It is found in the cell inner membrane. It catalyses the reaction K(+)(in) + H(+)(in) = K(+)(out) + H(+)(out). In terms of biological role, transport of potassium into the cell. Likely operates as a K(+):H(+) symporter. The sequence is that of Probable potassium transport system protein Kup from Chlorobium chlorochromatii (strain CaD3).